The following is a 528-amino-acid chain: Gamma-taxilin (528 aa).

The segment covering 1–10 (MATRVEEAAR) has biased composition (basic and acidic residues). Residues 1 to 36 (MATRVEEAARGRGGGAEEATEAGRGGRRRSPRQKFE) form a disordered region. Omega-N-methylarginine is present on residues R12 and R24. 4 positions are modified to phosphoserine: S79, S86, S97, and S105. A disordered region spans residues 102-130 (TQESREEIPGGEARTDPPDGQQDSECNRN). Positions 104–118 (ESREEIPGGEARTDP) are enriched in basic and acidic residues. A coiled-coil region spans residues 153-464 (EEKLAALCKK…LKEQVSIKAA (312 aa)). Y283 carries the phosphotyrosine modification. The tract at residues 486–528 (HKELNTSSKRALGAHLEAEPKSQRSAVQKPPSTGSAPAIESVD) is disordered. Positions 508–520 (QRSAVQKPPSTGS) are enriched in polar residues. S517 bears the Phosphoserine mark.

Belongs to the taxilin family. In terms of assembly, binds to the C-terminal coiled coil region of syntaxin family members STX1A, STX3A and STX4A. Forms a heterodimer with ATF4 in osteoblasts. Ubiquitously expressed. Expressed at high level in heart and skeletal muscle. Expressed in brain, placenta, lung, liver, kidney and pancreas.

The protein localises to the nucleus membrane. The protein resides in the cytoplasm. Its subcellular location is the cytosol. May be involved in intracellular vesicle traffic. Inhibits ATF4-mediated transcription, possibly by dimerizing with ATF4 to form inactive dimers that cannot bind DNA. May be involved in regulating bone mass density through an ATF4-dependent pathway. May be involved in cell cycle progression. In Homo sapiens (Human), this protein is Gamma-taxilin (TXLNG).